The primary structure comprises 232 residues: Zinc-finger homeodomain protein 5 (232 aa).

Over residues 1-11 (MELSEHEEDAG) the composition is skewed to acidic residues. Positions 1-25 (MELSEHEEDAGDVGGGCSSPPTPPH) are disordered. The ZF-HD dimerization-type; degenerate zinc-finger motif lies at 40–86 (YHECLRNHAAASGGHVVDGCGEFMPASTEEPLACAACGCHRSFHRRD). A disordered region spans residues 126-170 (GLPFPGYGTPSGGTGTTTASSSDERLRPSPVQPRRRSRTTFTREQ). The segment at residues 159-222 (RRRSRTTFTR…NNKHSFKQKQ (64 aa)) is a DNA-binding region (homeobox).

As to quaternary structure, homo- and heterodimer with other ZFHD proteins.

The protein resides in the nucleus. Its function is as follows. Putative transcription factor. The chain is Zinc-finger homeodomain protein 5 (ZHD5) from Oryza sativa subsp. japonica (Rice).